The primary structure comprises 64 residues: UPF0337 protein SAB0772 (64 aa).

The tract at residues 1–40 (MADESKFEQAKGNVKETIGNVTDNKNLENEGKEDKASGKA) is disordered. Positions 25 to 40 (KNLENEGKEDKASGKA) are enriched in basic and acidic residues.

This sequence belongs to the UPF0337 (CsbD) family.

This is UPF0337 protein SAB0772 from Staphylococcus aureus (strain bovine RF122 / ET3-1).